The sequence spans 377 residues: Molybdenum import ATP-binding protein ModC (377 aa).

The ABC transporter domain maps to 4–240 (IAPRSIRGEF…PALPLATARD (237 aa)). An ATP-binding site is contributed by 38–45 (GPSGCGKS). Positions 299–369 (RTSILNILPA…IKGVALAPER (71 aa)) constitute a Mop domain.

Belongs to the ABC transporter superfamily. Molybdate importer (TC 3.A.1.8) family. In terms of assembly, the complex is composed of two ATP-binding proteins (ModC), two transmembrane proteins (ModB) and a solute-binding protein (ModA).

The protein localises to the cell inner membrane. The catalysed reaction is molybdate(out) + ATP + H2O = molybdate(in) + ADP + phosphate + H(+). Part of the ABC transporter complex ModABC involved in molybdenum import. Responsible for energy coupling to the transport system. This Rhodopseudomonas palustris (strain HaA2) protein is Molybdenum import ATP-binding protein ModC.